Consider the following 271-residue polypeptide: Peroxisomal biogenesis factor 2 (271 aa).

Topologically, residues Met1–Ser2 are peroxisomal matrix. Residues Arg3 to Asn29 traverse the membrane as a helical segment. Residues Thr30–His33 lie on the Cytoplasmic side of the membrane. The helical transmembrane segment at Lys34–Cys60 threads the bilayer. The Peroxisomal matrix segment spans residues Thr61–Thr77. A helical transmembrane segment spans residues Leu78–Phe97. The Cytoplasmic segment spans residues Asn98–His101. The helical transmembrane segment at Cys102–Ala133 threads the bilayer. Topologically, residues Glu134–Gly175 are peroxisomal matrix. The chain crosses the membrane as a helical span at residues Leu176–Leu197. The Cytoplasmic portion of the chain corresponds to Thr198–Tyr271. Residues Cys222, Cys225, Cys237, Cys238, Cys243, Cys246, Cys256, and Cys259 each coordinate Zn(2+). The RING-type zinc-finger motif lies at Cys222–Cys259.

Belongs to the pex2/pex10/pex12 family. Component of the PEX2-PEX10-PEX12 retrotranslocation channel, composed of PEX2, PEX10 and PEX12.

It localises to the peroxisome membrane. It carries out the reaction [E2 ubiquitin-conjugating enzyme]-S-ubiquitinyl-L-cysteine + [acceptor protein]-L-cysteine = [E2 ubiquitin-conjugating enzyme]-L-cysteine + [acceptor protein]-S-ubiquitinyl-L-cysteine.. The protein operates within protein modification; protein ubiquitination. E3 ubiquitin-protein ligase component of a retrotranslocation channel required for peroxisome organization by mediating export of the PEX5 receptor from peroxisomes to the cytosol, thereby promoting PEX5 recycling. The retrotranslocation channel is composed of PEX2, PEX10 and PEX12; each subunit contributing transmembrane segments that coassemble into an open channel that specifically allows the passage of PEX5 through the peroxisomal membrane. PEX2 also regulates peroxisome organization by acting as a E3 ubiquitin-protein ligase. PEX2 ubiquitinates PEX5 during its passage through the retrotranslocation channel: catalyzes monoubiquitination of PEX5 at 'Cys-6', a modification that acts as a signal for PEX5 extraction into the cytosol. The protein is Peroxisomal biogenesis factor 2 of Saccharomyces cerevisiae (strain ATCC 204508 / S288c) (Baker's yeast).